An 88-amino-acid chain; its full sequence is Sec-independent protein translocase protein TatA (88 aa).

A helical membrane pass occupies residues 1-21; sequence MGSLSPWHWVVLVVVVVLLFG. Residues 49–71 show a composition bias toward polar residues; the sequence is ENQAQASALETPMQNPTVVQSQR. The disordered stretch occupies residues 49–88; the sequence is ENQAQASALETPMQNPTVVQSQRVVPPWSTEQDHTEARPA. The segment covering 79-88 has biased composition (basic and acidic residues); the sequence is EQDHTEARPA.

Belongs to the TatA/E family. As to quaternary structure, the Tat system comprises two distinct complexes: a TatABC complex, containing multiple copies of TatA, TatB and TatC subunits, and a separate TatA complex, containing only TatA subunits. Substrates initially bind to the TatABC complex, which probably triggers association of the separate TatA complex to form the active translocon.

Its subcellular location is the cell membrane. In terms of biological role, part of the twin-arginine translocation (Tat) system that transports large folded proteins containing a characteristic twin-arginine motif in their signal peptide across membranes. TatA could form the protein-conducting channel of the Tat system. This is Sec-independent protein translocase protein TatA from Mycobacterium leprae (strain TN).